The sequence spans 299 residues: HTH-type transcriptional regulator CrgA (299 aa).

The HTH lysR-type domain occupies 1-60; the sequence is MKTNSEELTVFVQVVESGSFSRAAEQLAMANSAVSRIVKRLEEKLGVNLLNRTTRQLSLT. The segment at residues 20–39 is a DNA-binding region (H-T-H motif); sequence FSRAAEQLAMANSAVSRIVK.

It belongs to the LysR transcriptional regulatory family. As to quaternary structure, forms oligomers. Oligomerization is required for DNA binding.

In terms of biological role, involved in the regulation of bacterial adhesion to host epithelial cells. May play a central regulatory role in meningococcal adhesion, particularly in switching from initial adhesion to intimate adhesion by downregulating the bacterial surface structures that hinder this adhesion. During intimate adhesion, negatively regulates the expression of pilC1, encoding a pilus-associated protein, pilE, encoding the pilin, and sia genes, encoding the capsule. Also negatively regulates its own expression. May also regulate other genes that are involved in intimate adhesion. Binds specifically to the promoter region of pilC1 and crgA (both harboring a CREN element), and pilE and sia (both devoid of a CREN element). Acts through interaction with RNA polymerase (RNAP). Interaction with RNAP leads to the production of short abortive transcripts, suggesting that CrgA may act by preventing RNAP from clearing the promoter. In Neisseria meningitidis serogroup C (strain 8013), this protein is HTH-type transcriptional regulator CrgA.